We begin with the raw amino-acid sequence, 327 residues long: MALSNSNSTTATVTLPDTLRFWPWQRHINPHYSACKKASSEWCESFKAFSPQAQRAFNKCDFNGCRIGCDLMNLFFIIDEHTDIASAETARTQANIIMEAIRDPEMPRSENEWVGGKAAQQFWLNATKSATPSAHRRFIDAFQMYMDAVVQQAADRSKNYVRDIDDYFVVRRDTIGAKPSFAICELYLNLPDSVMEHPVIMKLTELCIDVIIIGNDLCSYKVEHEHGDDGHNLITVVMNQFKITPQEAMNYISDLHDKLAVQFLDEWKNIPTFGGPLDLEVRTYCHGLGNWVRANDSWSFESERYFGKRGIEIQTTRQIEMNIQSHL.

Mg(2+) contacts are provided by Asp79, Asn215, Ser219, and Glu223. The DDXXD motif signature appears at 79–83; it reads DEHTD. Positions 304 and 305 each coordinate (2E,6E)-farnesyl diphosphate.

This sequence belongs to the terpene synthase family. Requires Mg(2+) as cofactor.

The enzyme catalyses (2E,6E)-farnesyl diphosphate = Delta(6)-protoilludene + diphosphate. Terpene cyclase that catalyzes the cyclization of farnesyl diphosphate (FPP) to delta(6)-protoilludene. The protein is Delta(6)-protoilludene synthase HYPSUDRAFT_138665 of Hypholoma sublateritium (strain FD-334 SS-4).